A 237-amino-acid chain; its full sequence is UDP-2,3-diacylglucosamine hydrolase (237 aa).

Mn(2+) contacts are provided by D8, H10, D41, N78, and H113. 78–79 contributes to the substrate binding site; the sequence is NR. Substrate is bound by residues D121, S159, Q164, and H195. Mn(2+) is bound by residues H195 and H197.

It belongs to the LpxH family. It depends on Mn(2+) as a cofactor.

Its subcellular location is the cell inner membrane. It carries out the reaction UDP-2-N,3-O-bis[(3R)-3-hydroxytetradecanoyl]-alpha-D-glucosamine + H2O = 2-N,3-O-bis[(3R)-3-hydroxytetradecanoyl]-alpha-D-glucosaminyl 1-phosphate + UMP + 2 H(+). Its pathway is glycolipid biosynthesis; lipid IV(A) biosynthesis; lipid IV(A) from (3R)-3-hydroxytetradecanoyl-[acyl-carrier-protein] and UDP-N-acetyl-alpha-D-glucosamine: step 4/6. Hydrolyzes the pyrophosphate bond of UDP-2,3-diacylglucosamine to yield 2,3-diacylglucosamine 1-phosphate (lipid X) and UMP by catalyzing the attack of water at the alpha-P atom. Involved in the biosynthesis of lipid A, a phosphorylated glycolipid that anchors the lipopolysaccharide to the outer membrane of the cell. This Chromobacterium violaceum (strain ATCC 12472 / DSM 30191 / JCM 1249 / CCUG 213 / NBRC 12614 / NCIMB 9131 / NCTC 9757 / MK) protein is UDP-2,3-diacylglucosamine hydrolase.